We begin with the raw amino-acid sequence, 294 residues long: Deubiquitinase OTUD6B (294 aa).

Disordered stretches follow at residues 1–46 and 67–120; these read MDEA…RKQL and AFAQ…ERDE. 2 stretches are compositionally biased toward polar residues: residues 27–36 and 73–86; these read KIQSMKNSVP and PEPTQVSGITNGVT. Residues 111-120 show a composition bias toward basic and acidic residues; it reads KAAQEKERDE. The OTU domain occupies 150-287; that stretch reads LQIRQIPSDG…GEHYNSVELL (138 aa). The segment at 155-161 is cys-loop; sequence IPSDGHC. Asp-158 is a catalytic residue. Catalysis depends on Cys-161, which acts as the Nucleophile. Residues 222 to 232 form a variable-loop region; that stretch reads IVNTPAWGGQL. The tract at residues 270–280 is his-loop; it reads YMRHAYGLGEH. His-280 is a catalytic residue.

The catalysed reaction is Thiol-dependent hydrolysis of ester, thioester, amide, peptide and isopeptide bonds formed by the C-terminal Gly of ubiquitin (a 76-residue protein attached to proteins as an intracellular targeting signal).. In terms of biological role, deubiquitinating enzyme that may play a role in the ubiquitin-dependent regulation of different cellular processes. This chain is Deubiquitinase OTUD6B (otud6b), found in Xenopus tropicalis (Western clawed frog).